The sequence spans 404 residues: Argininosuccinate synthase (404 aa).

ATP contacts are provided by residues 12–20 and Ala-40; that span reads AYSGGLDTS. L-citrulline-binding residues include Tyr-92 and Ser-97. An ATP-binding site is contributed by Gly-122. 3 residues coordinate L-aspartate: Thr-124, Asn-128, and Asp-129. Asn-128 provides a ligand contact to L-citrulline. 5 residues coordinate L-citrulline: Arg-132, Ser-181, Ser-190, Glu-266, and Tyr-278.

The protein belongs to the argininosuccinate synthase family. Type 1 subfamily. In terms of assembly, homotetramer.

The protein localises to the cytoplasm. It catalyses the reaction L-citrulline + L-aspartate + ATP = 2-(N(omega)-L-arginino)succinate + AMP + diphosphate + H(+). It participates in amino-acid biosynthesis; L-arginine biosynthesis; L-arginine from L-ornithine and carbamoyl phosphate: step 2/3. In Erwinia tasmaniensis (strain DSM 17950 / CFBP 7177 / CIP 109463 / NCPPB 4357 / Et1/99), this protein is Argininosuccinate synthase.